Reading from the N-terminus, the 891-residue chain is Valine--tRNA ligase (891 aa).

Residues Pro43–His53 carry the 'HIGH' region motif. Residues Lys536–Ser540 carry the 'KMSKS' region motif. Position 539 (Lys539) interacts with ATP.

This sequence belongs to the class-I aminoacyl-tRNA synthetase family. ValS type 2 subfamily.

The protein resides in the cytoplasm. It carries out the reaction tRNA(Val) + L-valine + ATP = L-valyl-tRNA(Val) + AMP + diphosphate. In terms of biological role, catalyzes the attachment of valine to tRNA(Val). As ValRS can inadvertently accommodate and process structurally similar amino acids such as threonine, to avoid such errors, it has a 'posttransfer' editing activity that hydrolyzes mischarged Thr-tRNA(Val) in a tRNA-dependent manner. The protein is Valine--tRNA ligase of Pyrococcus furiosus (strain ATCC 43587 / DSM 3638 / JCM 8422 / Vc1).